Reading from the N-terminus, the 418-residue chain is Multidrug resistance protein MdtG (418 aa).

A run of 11 helical transmembrane segments spans residues 19–39 (IGCF…PLYV), 56–76 (LVFS…GGLA), 90–110 (LGMA…QFLI), 113–133 (ALLG…ATQI), 144–164 (TLST…GVLA), 171–191 (PVFF…LLFI), 222–242 (LFVT…ILTL), 251–271 (VANI…AALI), 288–308 (ILIA…FVQT), 317–337 (FLLG…LVYN), and 376–396 (AVFL…GLSL).

This sequence belongs to the major facilitator superfamily. DHA1 family. MdtG (TC 2.A.1.2.20) subfamily.

It is found in the cell inner membrane. The protein is Multidrug resistance protein MdtG of Enterobacter lignolyticus (strain SCF1).